The primary structure comprises 464 residues: Isthmin-1 (464 aa).

The first 29 residues, 1–29, serve as a signal peptide directing secretion; sequence MVRLAAELLLLLGLLLLTLHITVLRGSGA. Asparagine 39 carries N-linked (GlcNAc...) asparagine glycosylation. Disordered regions lie at residues 50 to 98, 135 to 155, and 173 to 219; these read NVGS…LQRD, PDSE…SVPS, and SGDQ…STDG. The span at 51–63 shows a compositional bias: polar residues; it reads VGSDTTSETSFSL. 2 stretches are compositionally biased toward basic and acidic residues: residues 66–76 and 138–147; these read EAPREHLDHQA and EADKDQHPEN. The TSP type-1 domain occupies 218 to 262; that stretch reads DGEGDWSLWSVCSVTCGNGNQKRTRSCGYACTATESRTCDRPNCP. 3 cysteine pairs are disulfide-bonded: cysteine 229-cysteine 256, cysteine 233-cysteine 261, and cysteine 244-cysteine 248. The 164-residue stretch at 289–452 folds into the AMOP domain; it reads LFEVDTDSCE…QKCTESPSDE (164 aa).

This sequence belongs to the isthmin family. Interacts with integrin ITGAV/ITGB5.

It localises to the secreted. Its function is as follows. Acts as an angiogenesis inhibitor. This is Isthmin-1 (ISM1) from Homo sapiens (Human).